Here is a 95-residue protein sequence, read N- to C-terminus: Protein TusB (95 aa).

This sequence belongs to the DsrH/TusB family. As to quaternary structure, heterohexamer, formed by a dimer of trimers. The hexameric TusBCD complex contains 2 copies each of TusB, TusC and TusD. The TusBCD complex interacts with TusE.

It is found in the cytoplasm. Its function is as follows. Part of a sulfur-relay system required for 2-thiolation of 5-methylaminomethyl-2-thiouridine (mnm(5)s(2)U) at tRNA wobble positions. The sequence is that of Protein TusB from Cronobacter sakazakii (strain ATCC BAA-894) (Enterobacter sakazakii).